The chain runs to 640 residues: F-box protein MET30 (640 aa).

Residues 1 to 19 (MRRERQRMMSFEDKDKDDL) show a composition bias toward basic and acidic residues. Residues 1 to 84 (MRRERQRMMS…ATNDSGTRVQ (84 aa)) form a disordered region. The interval 1–299 (MRRERQRMMS…KGHCRIQEFK (299 aa)) is necessary to mediate nuclear localization. Composition is skewed to polar residues over residues 45–56 (TGSSDDLAQGSS) and 64–82 (ATRS…SGTR). S67 bears the Phosphoserine mark. The interaction with SKP1/CBF3D stretch occupies residues 180 to 225 (KIDFISILPQELSLKILSYLDCQSLCNATRVCRKWQKLADDDRVWY). The interval 180–277 (KIDFISILPQ…TQTTRPWKVI (98 aa)) is important for mediating homomultimerization. The region spanning 181 to 227 (IDFISILPQELSLKILSYLDCQSLCNATRVCRKWQKLADDDRVWYHM) is the F-box domain. Residues 277 to 640 (IYRERFKVES…VKMYKFDLND (364 aa)) form an interaction with MET4 region. 8 WD repeats span residues 300-328 (GHMD…GIWD), 340-368 (GHSD…RVWN), 380-408 (GHSD…KVWH), 419-449 (GHTE…RMWD), 461-499 (GHVG…TMTD), 509-538 (NEQE…KLWD), 550-578 (GHVE…KVWD), and 607-635 (DKVA…KMYK). The segment covering 481-495 (ATDNTSDGSSPQDDP) has biased composition (polar residues). The interval 481–516 (ATDNTSDGSSPQDDPTMTDGADESDTPSNEQETVLD) is disordered.

Belongs to the WD repeat MET30/SCONB/SCON-2 family. As to quaternary structure, homomultimer. Interacts with CDC53 and SKP1/CBF3D to form the E3 ubiquitin ligase complex SCF(Met30). Interacts with MET4.

Its subcellular location is the cytoplasm. It is found in the nucleus. It functions in the pathway protein modification; protein ubiquitination. Its function is as follows. Substrate-recognition component of the SCF(Met30) complex, an E3 ubiquitin ligase complex that mediates the ubiquitination and subsequent proteasomal degradation of target proteins. Negatively regulates sulfur amino acids biosynthesis genes expression. Controls cell cycle function (being required for the G1/S transition and M-phase but not the S-phase), sulfur metabolism, and methionine biosynthesis as part of the SCF(Met30) complex. Required for the efficient binding of CDC45 and MCM proteins to origins of replication. Required for efficient expression of G1 cyclins. The SCF(Met30) complex catalyzes ubiquitination and degradation of the Cdk-inhibitory kinase SWE1. Involved in the S-adenosylmethionine (AdoMet)-mediated inhibition of the transcription function of MET4. The SCF(Met30) complex mediates ubiquitination and subsequent degradation of MET4 and the cellular response to cadmium. The SCF(Met30) complex acts as an inhibitor of autophagy by promoting ubiquitination and degradation of ATG9 in normal conditions. This Saccharomyces cerevisiae (strain ATCC 204508 / S288c) (Baker's yeast) protein is F-box protein MET30.